The primary structure comprises 233 residues: Adenosine 5'-phosphosulfate reductase (233 aa).

[4Fe-4S] cluster is bound by residues Cys120, Cys121, Cys203, and Cys206. Residue Cys229 is the Nucleophile; cysteine thiosulfonate intermediate of the active site.

It belongs to the PAPS reductase family. CysH subfamily. The cofactor is [4Fe-4S] cluster.

It localises to the cytoplasm. The catalysed reaction is [thioredoxin]-disulfide + sulfite + AMP + 2 H(+) = adenosine 5'-phosphosulfate + [thioredoxin]-dithiol. It functions in the pathway sulfur metabolism; hydrogen sulfide biosynthesis; sulfite from sulfate. In terms of biological role, catalyzes the formation of sulfite from adenosine 5'-phosphosulfate (APS) using thioredoxin as an electron donor. In Lysinibacillus sphaericus (strain C3-41), this protein is Adenosine 5'-phosphosulfate reductase.